Consider the following 427-residue polypeptide: ATP-sensitive inward rectifier potassium channel 12 (427 aa).

Topologically, residues 1–77 are cytoplasmic; it reads MTAASRANPY…LADMFTTCVD (77 aa). S-nitrosocysteine is present on Cys75. Residues 78–104 traverse the membrane as a helical segment; it reads IRWRYMLLIFSLAFLASWLLFGIIFWV. A 1,2-diacyl-sn-glycero-3-phospho-(1D-myo-inositol-4,5-bisphosphate) is bound by residues Arg79 and Arg81. Residues 105–129 are Extracellular-facing; that stretch reads IAVAHGDLEPAEGRGRTPCVLQVHG. Residues Cys123 and Cys155 are joined by a disulfide bond. An intramembrane region (helical; Pore-forming) is located at residues 130–146; the sequence is FMAAFLFSIETQTTIGY. Positions 143, 144, 145, and 146 each coordinate K(+). Residues 143-148 carry the Selectivity filter motif; the sequence is TIGYGL. The Extracellular portion of the chain corresponds to 147-155; that stretch reads GLRCVTEEC. The chain crosses the membrane as a helical span at residues 156–183; it reads PVAVFMVVAQSIVGCIIDSFMIGAIMAK. Residues Lys183 and Lys188 each contribute to the a 1,2-diacyl-sn-glycero-3-phospho-(1D-myo-inositol-4,5-bisphosphate) site. At 184–427 the chain is on the cytoplasmic side; sequence MARPKKRAQT…ERPYRRESEI (244 aa). The tract at residues 387–427 is disordered; the sequence is DEEDEVATDRDGRSPQPEHDFDRLQASSAALERPYRRESEI. The segment covering 393–409 has biased composition (basic and acidic residues); the sequence is ATDRDGRSPQPEHDFDR. The PDZ-binding motif lies at 425–427; it reads SEI.

The protein belongs to the inward rectifier-type potassium channel (TC 1.A.2.1) family. KCNJ12 subfamily. In terms of assembly, homotetramer. Forms heteromer with KCNJ4. Can form heteromeric channels with Kir2.6/KCNJ18. Association, via its PDZ-recognition domain, with LIN7A, LIN7B, LIN7C, DLG1, CASK and APBA1 plays a key role in its localization and trafficking. In terms of tissue distribution, highest level in cerebellum.

The protein localises to the membrane. The protein resides in the cell membrane. It localises to the sarcolemma. Its subcellular location is the T-tubule. The catalysed reaction is K(+)(in) = K(+)(out). Its activity is regulated as follows. Activated by phosphatidylinositol 4,5-biphosphate (PtdIns(4,5)P2). PtdIns(4,5)P2 binding to the cytoplasmic side of the channel triggers a conformation change leading to channel opening. Inhibited by Ba(2+). Its function is as follows. Inward rectifying potassium channel that probably participates in controlling the resting membrane potential in electrically excitable cells. It probably participates in establishing action potential waveform and excitability of neuronal and muscle tissues. Inward rectifier potassium channels are characterized by a greater tendency to allow potassium to flow into the cell rather than out of it. Their voltage dependence is regulated by the concentration of extracellular potassium; as external potassium is raised, the voltage range of the channel opening shifts to more positive voltages. The inward rectification is mainly due to the blockage of outward current by internal magnesium. The polypeptide is ATP-sensitive inward rectifier potassium channel 12 (Kcnj12) (Mus musculus (Mouse)).